The sequence spans 431 residues: 3-phosphoshikimate 1-carboxyvinyltransferase (431 aa).

3-phosphoshikimate contacts are provided by Lys23, Ser24, and Arg28. Residue Lys23 coordinates phosphoenolpyruvate. 2 residues coordinate phosphoenolpyruvate: Gly96 and Arg124. The 3-phosphoshikimate site is built by Ser169, Gln171, Asp317, and Lys344. Gln171 is a phosphoenolpyruvate binding site. Residue Asp317 is the Proton acceptor of the active site. 2 residues coordinate phosphoenolpyruvate: Arg348 and Arg390.

The protein belongs to the EPSP synthase family. In terms of assembly, monomer.

Its subcellular location is the cytoplasm. The enzyme catalyses 3-phosphoshikimate + phosphoenolpyruvate = 5-O-(1-carboxyvinyl)-3-phosphoshikimate + phosphate. It participates in metabolic intermediate biosynthesis; chorismate biosynthesis; chorismate from D-erythrose 4-phosphate and phosphoenolpyruvate: step 6/7. Catalyzes the transfer of the enolpyruvyl moiety of phosphoenolpyruvate (PEP) to the 5-hydroxyl of shikimate-3-phosphate (S3P) to produce enolpyruvyl shikimate-3-phosphate and inorganic phosphate. The chain is 3-phosphoshikimate 1-carboxyvinyltransferase from Syntrophotalea carbinolica (strain DSM 2380 / NBRC 103641 / GraBd1) (Pelobacter carbinolicus).